The following is a 53-amino-acid chain: MLRWAVIFLVIALVAAVLGFGGIAGSAAGIAKIIFFVFLVLLVISVVMGRRKV.

The next 2 membrane-spanning stretches (helical) occupy residues 4–24 and 28–48; these read WAVIFLVIALVAAVLGFGGIA and AGIAKIIFFVFLVLLVISVVM.

This sequence belongs to the UPF0391 family.

It localises to the cell membrane. The protein is UPF0391 membrane protein Patl_1732 of Pseudoalteromonas atlantica (strain T6c / ATCC BAA-1087).